A 497-amino-acid polypeptide reads, in one-letter code: Glycerol kinase (497 aa).

Threonine 12 lines the ADP pocket. The ATP site is built by threonine 12, threonine 13, and serine 14. Threonine 12 lines the sn-glycerol 3-phosphate pocket. Arginine 16 is an ADP binding site. Sn-glycerol 3-phosphate is bound by residues arginine 82, glutamate 83, tyrosine 134, and aspartate 243. The glycerol site is built by arginine 82, glutamate 83, tyrosine 134, aspartate 243, and glutamine 244. Residues threonine 265 and glycine 308 each contribute to the ADP site. Threonine 265, glycine 308, glutamine 312, and glycine 411 together coordinate ATP. Glycine 411 serves as a coordination point for ADP.

The protein belongs to the FGGY kinase family.

The enzyme catalyses glycerol + ATP = sn-glycerol 3-phosphate + ADP + H(+). Its pathway is polyol metabolism; glycerol degradation via glycerol kinase pathway; sn-glycerol 3-phosphate from glycerol: step 1/1. Its activity is regulated as follows. Inhibited by fructose 1,6-bisphosphate (FBP). Its function is as follows. Key enzyme in the regulation of glycerol uptake and metabolism. Catalyzes the phosphorylation of glycerol to yield sn-glycerol 3-phosphate. The sequence is that of Glycerol kinase from Sinorhizobium fredii (strain NBRC 101917 / NGR234).